The primary structure comprises 1479 residues: C-type mannose receptor 2 (1479 aa).

Positions 1–30 (MGPGRPAPAPWPRHLLRCVLLLGCLHLGRP) are cleaved as a signal peptide. Topologically, residues 31-1414 (GAPGDAALPE…PSALPENPAA (1384 aa)) are extracellular. A Ricin B-type lectin domain is found at 41-167 (PNVFLIFSHG…WRIYGSEEDL (127 aa)). A disulfide bridge links C54 with C68. N69 carries N-linked (GlcNAc...) (complex) asparagine glycosylation. An intrachain disulfide couples C93 to C112. N140 carries an N-linked (GlcNAc...) asparagine glycan. In terms of domain architecture, Fibronectin type-II spans 182-230 (SHGKPCTIPFKYDNQWFHGCTSTGREDGHLWCATTQDYGKDERWGFCPI). Intrachain disulfides connect C187/C213, C201/C228, C266/C359, and C335/C351. The region spanning 244-360 (LTDSCYQFNF…CSIALPYVCK (117 aa)) is the C-type lectin 1 domain. N-linked (GlcNAc...) asparagine glycosylation occurs at N364. C-type lectin domains lie at 389 to 505 (FQGH…SICK), 528 to 644 (HSPS…RYIC), 678 to 809 (KLRY…WICK), and 832 to 951 (FQEA…YICK). 2 disulfides stabilise this stretch: C410–C504 and C481–C496. The N-linked (GlcNAc...) asparagine glycan is linked to N588. 5 cysteine pairs are disulfide-bonded: C618–C635, C704–C808, C785–C800, C853–C950, and C927–C942. 2 N-linked (GlcNAc...) asparagine glycosylation sites follow: N954 and N1029. 3 C-type lectin domains span residues 979–1107 (FLNK…GFIC), 1132–1243 (YLNG…GAVC), and 1273–1393 (FREH…GVVC). An intrachain disulfide couples C1078 to C1098. Residue K1142 forms a Glycyl lysine isopeptide (Lys-Gly) (interchain with G-Cter in SUMO1) linkage. An intrachain disulfide couples C1220 to C1234. N1350 is a glycosylation site (N-linked (GlcNAc...) asparagine). C1369 and C1384 are joined by a disulfide. A helical transmembrane segment spans residues 1415–1435 (LVVVLMAVLLLLALLTAALIL). The Cytoplasmic segment spans residues 1436–1479 (YRRRQSIERGAFEGARYSRSSSSPTEATEKNILVSDMEMNEQQE). The disordered stretch occupies residues 1450–1479 (ARYSRSSSSPTEATEKNILVSDMEMNEQQE).

In terms of assembly, interacts with C-terminal region of type I collagen/COL1A1. Interacts directly with PLAUR/UPAR and PLAU/pro-UPA to form a tri-molecular complex. Interacts with collagen V. N-glycosylated. Ubiquitous with low expression in brain, placenta, lung, kidney, pancreas, spleen, thymus and colon. Expressed in endothelial cells, fibroblasts and macrophages. Highly expressed in fetal lung and kidney.

It localises to the membrane. Functionally, may play a role as endocytotic lectin receptor displaying calcium-dependent lectin activity. Internalizes glycosylated ligands from the extracellular space for release in an endosomal compartment via clathrin-mediated endocytosis. May be involved in plasminogen activation system controlling the extracellular level of PLAUR/PLAU, and thus may regulate protease activity at the cell surface. May contribute to cellular uptake, remodeling and degradation of extracellular collagen matrices. May play a role during cancer progression as well as in other chronic tissue destructive diseases acting on collagen turnover. May participate in remodeling of extracellular matrix cooperating with the matrix metalloproteinases (MMPs). In Homo sapiens (Human), this protein is C-type mannose receptor 2 (MRC2).